Consider the following 317-residue polypeptide: Sulfate adenylyltransferase subunit 2 (317 aa).

2 disordered regions span residues 1-21 and 298-317; these read MPDSRPDTELSNPQSAKAPLD and RAIDRDQSGSMEKKKREGYF.

Belongs to the PAPS reductase family. CysD subfamily. Heterodimer composed of CysD, the smaller subunit, and CysN.

The enzyme catalyses sulfate + ATP + H(+) = adenosine 5'-phosphosulfate + diphosphate. Its pathway is sulfur metabolism; hydrogen sulfide biosynthesis; sulfite from sulfate: step 1/3. With CysN forms the ATP sulfurylase (ATPS) that catalyzes the adenylation of sulfate producing adenosine 5'-phosphosulfate (APS) and diphosphate, the first enzymatic step in sulfur assimilation pathway. APS synthesis involves the formation of a high-energy phosphoric-sulfuric acid anhydride bond driven by GTP hydrolysis by CysN coupled to ATP hydrolysis by CysD. The protein is Sulfate adenylyltransferase subunit 2 of Rhizobium johnstonii (strain DSM 114642 / LMG 32736 / 3841) (Rhizobium leguminosarum bv. viciae).